We begin with the raw amino-acid sequence, 138 residues long: Drosulfakinins (138 aa).

The first 33 residues, 1 to 33 (MGLRSCTHFATLVMPLWALAFCFLVLVPVPAQT), serve as a signal peptide directing secretion. The propeptide occupies 34-73 (TSLQISKGDRRLQDLESNMGAESDQPNANLVGTSLSRFGD). A Phenylalanine amide modification is found at Phe-82. The propeptide occupies 86–108 (VPRPIIPIELDLLMDNDDENTKA). A Sulfotyrosine modification is found at Tyr-114. Phenylalanine amide is present on Phe-119. A Sulfotyrosine modification is found at Tyr-131. Phe-136 is modified (phenylalanine amide).

Belongs to the gastrin/cholecystokinin family.

It localises to the secreted. Drosulfakinin-0 (DSK 0) plays diverse biological roles including regulating gut muscle contraction in adults but not in larvae. This chain is Drosulfakinins, found in Drosophila teissieri (Fruit fly).